Consider the following 295-residue polypeptide: Nicotinate-nucleotide pyrophosphorylase [carboxylating] (295 aa).

Residues R107, 142–144 (TRK), R166, K176, E206, D227, and 256–258 (SGG) each bind substrate.

It belongs to the NadC/ModD family. As to quaternary structure, hexamer formed by 3 homodimers.

It localises to the cytoplasm. The protein resides in the nucleus. The catalysed reaction is nicotinate beta-D-ribonucleotide + CO2 + diphosphate = quinolinate + 5-phospho-alpha-D-ribose 1-diphosphate + 2 H(+). It functions in the pathway cofactor biosynthesis; NAD(+) biosynthesis; nicotinate D-ribonucleotide from quinolinate: step 1/1. Its function is as follows. Involved in the catabolism of quinolinic acid (QA). In Saccharomyces cerevisiae (strain ATCC 204508 / S288c) (Baker's yeast), this protein is Nicotinate-nucleotide pyrophosphorylase [carboxylating] (BNA6).